Reading from the N-terminus, the 237-residue chain is Uridylate kinase (237 aa).

An ATP-binding site is contributed by 11 to 14 (KLSG). UMP is bound at residue Gly-53. Positions 54 and 58 each coordinate ATP. UMP-binding positions include Asp-73 and 134–141 (TGNPFFTT). 3 residues coordinate ATP: Thr-161, Tyr-167, and Asp-170.

It belongs to the UMP kinase family. Homohexamer.

Its subcellular location is the cytoplasm. It catalyses the reaction UMP + ATP = UDP + ADP. It functions in the pathway pyrimidine metabolism; CTP biosynthesis via de novo pathway; UDP from UMP (UMPK route): step 1/1. Its activity is regulated as follows. Inhibited by UTP. Catalyzes the reversible phosphorylation of UMP to UDP. The polypeptide is Uridylate kinase (Burkholderia vietnamiensis (strain G4 / LMG 22486) (Burkholderia cepacia (strain R1808))).